The sequence spans 30 residues: Poly-His-poly-Gly peptide 2 (30 aa).

Basic residues predominate over residues 1–18 (EDDHDHHHHHHHHHHHHG). Positions 1–30 (EDDHDHHHHHHHHHHHHGVGGGGGGGGGGA) are disordered. The span at 19-30 (VGGGGGGGGGGA) shows a compositional bias: gly residues.

In terms of tissue distribution, expressed by the venom gland.

Its subcellular location is the secreted. Functionally, may serve as a metalloproteinase inhibitor during glandular storage. Their inhibition may be instantly disengaged, by dilution or physiochemical change, when venom is injected into tissue of the victim. The polypeptide is Poly-His-poly-Gly peptide 2 (Atheris nitschei (Great lakes bush viper)).